The primary structure comprises 339 residues: HPr kinase/phosphorylase (339 aa).

Residues His153 and Lys174 contribute to the active site. 168–175 (GKSGLGKS) is an ATP binding site. Ser175 contributes to the Mg(2+) binding site. The active-site Proton acceptor; for phosphorylation activity. Proton donor; for dephosphorylation activity is Asp192. The segment at 216–225 (MEIRGLGVVD) is important for the catalytic mechanism of both phosphorylation and dephosphorylation. Glu217 contacts Mg(2+). The active site involves Arg258. The interval 279-284 (PINPGK) is important for the catalytic mechanism of dephosphorylation.

The protein belongs to the HPrK/P family. As to quaternary structure, homohexamer. Mg(2+) is required as a cofactor.

The enzyme catalyses [HPr protein]-L-serine + ATP = [HPr protein]-O-phospho-L-serine + ADP + H(+). It carries out the reaction [HPr protein]-O-phospho-L-serine + phosphate + H(+) = [HPr protein]-L-serine + diphosphate. In terms of biological role, catalyzes the ATP- as well as the pyrophosphate-dependent phosphorylation of a specific serine residue in HPr, a phosphocarrier protein of the phosphoenolpyruvate-dependent sugar phosphotransferase system (PTS). HprK/P also catalyzes the pyrophosphate-producing, inorganic phosphate-dependent dephosphorylation (phosphorolysis) of seryl-phosphorylated HPr (P-Ser-HPr). The chain is HPr kinase/phosphorylase from Chlorobium phaeobacteroides (strain BS1).